Consider the following 765-residue polypeptide: Polyribonucleotide nucleotidyltransferase (765 aa).

Mg(2+)-binding residues include aspartate 556 and aspartate 562. In terms of domain architecture, KH spans 622-681 (PRITKISIPQNKIGEVIGPKGKTINQITEETGANISIEDDGTVFVSAVGGEAAEAAIEKI). One can recognise an S1 motif domain in the interval 693–762 (GDRFLGTVVK…NRGKISLVPV (70 aa)).

It belongs to the polyribonucleotide nucleotidyltransferase family. Mg(2+) is required as a cofactor.

It localises to the cytoplasm. It carries out the reaction RNA(n+1) + phosphate = RNA(n) + a ribonucleoside 5'-diphosphate. Involved in mRNA degradation. Catalyzes the phosphorolysis of single-stranded polyribonucleotides processively in the 3'- to 5'-direction. This Corynebacterium urealyticum (strain ATCC 43042 / DSM 7109) protein is Polyribonucleotide nucleotidyltransferase.